Reading from the N-terminus, the 86-residue chain is Cell division protein ZapA (86 aa).

The protein belongs to the ZapA family. Type 2 subfamily. Homodimer. Interacts with FtsZ.

It localises to the cytoplasm. Its function is as follows. Activator of cell division through the inhibition of FtsZ GTPase activity, therefore promoting FtsZ assembly into bundles of protofilaments necessary for the formation of the division Z ring. It is recruited early at mid-cell but it is not essential for cell division. This is Cell division protein ZapA from Oceanobacillus iheyensis (strain DSM 14371 / CIP 107618 / JCM 11309 / KCTC 3954 / HTE831).